The sequence spans 498 residues: Pentatricopeptide repeat-containing protein At2g15980 (498 aa).

PPR repeat units lie at residues 244-274 (NATT…MEEE), 280-314 (NVYS…GVVY), 315-349 (DIVA…GIEC), 350-384 (TCLT…GFEA), 385-423 (DGLT…MFYP), 424-458 (SRNC…GFKP), and 459-489 (SQET…MAES).

The protein belongs to the PPR family. P subfamily.

In Arabidopsis thaliana (Mouse-ear cress), this protein is Pentatricopeptide repeat-containing protein At2g15980.